The sequence spans 182 residues: Organic solute transporter subunit beta (182 aa).

The first 20 residues, 1–20 (MSGLLKYLFGCFILCLLLQG), serve as a signal peptide directing secretion. At 21 to 64 (KTHMTSATISKPHETIDIEKQNMTGERNSTLAQQLSFPMEDPTN) the chain is on the extracellular side. Residues asparagine 42 and asparagine 48 are each glycosylated (N-linked (GlcNAc...) asparagine). Residues 65 to 85 (WNYAILALAFVVLFLAFLILA) traverse the membrane as a helical segment. Residues 86–182 (QNSRANRTRK…LYTDSKEDDV (97 aa)) are Cytoplasmic-facing.

Belongs to the OST-beta family. In terms of assembly, interacts with slc51a. The Ost-alpha/Ost-beta complex is a heterodimer composed of alpha (slc51a) and beta (slc51b) subunit; may induce the transport of slc51a from the endoplasmic reticulum to the plasma membrane. In terms of tissue distribution, expressed in liver.

Its subcellular location is the cell membrane. Functionally, essential component of the Ost-alpha/Ost-beta complex, a heterodimer that acts as the intestinal basolateral transporter responsible for bile acid export from enterocytes into portal blood. Efficiently transports the major species of bile acids. May modulate slc51a glycosylation, membrane trafficking and stability activities. Able to transport taurocholate, estrone sulfate, digoxin, and prostaglandin E(2), but not p-aminohippurate or S-dinitrophenyl glutathione. The chain is Organic solute transporter subunit beta (slc51b) from Leucoraja erinaceus (Little skate).